We begin with the raw amino-acid sequence, 255 residues long: uncharacterized protein (255 aa).

A run of 2 helical transmembrane segments spans residues 99–119 (ISLIYLLTVGMLINVCVITSF) and 146–166 (YIGSAFITPALYFTLTLILFL).

The protein localises to the mitochondrion membrane. This is an uncharacterized protein from Schizosaccharomyces pombe (strain 972 / ATCC 24843) (Fission yeast).